Here is a 420-residue protein sequence, read N- to C-terminus: Dynein axonemal assembly factor 4 (420 aa).

Residues 3–87 (VRVSEFSWQQ…KEPVLWESLS (85 aa)) form the CS domain. Residues 7 to 103 (EFSWQQTPAA…EMMQRIREKS (97 aa)) form a mediates interaction with ESR1 and STUB1 region. Residues 165–192 (CQKKADGQKRVQRKEKPLQGKQAEERGA) are compositionally biased toward basic and acidic residues. Residues 165 to 212 (CQKKADGQKRVQRKEKPLQGKQAEERGALKPQSLPRKAPPTRLPTRGR) are disordered. 3 TPR repeats span residues 288-321 (PDWLKDKGNKLFATENYLAAIDAYNLAIRLNRKI), 323-355 (VLYLNRAACHLKLKNLHKAIEDSSKALELLTPP), and 364-397 (MKAHVRRGTAFCQLELYVEGLQDYEAALKIDPAN).

As to quaternary structure, interacts with ZMYND10. Interacts with STUB1. Interacts with ESR1 and ESR2. Interacts with DNAAF2. Interacts with CCT3, CCT4, CCT5 and CCT8. Interacts with DNAAF6/PIH1D3.

Its subcellular location is the nucleus. It localises to the cytoplasm. The protein resides in the cell projection. It is found in the neuron projection. The protein localises to the dynein axonemal particle. In terms of biological role, involved in neuronal migration during development of the cerebral neocortex. May regulate the stability and proteasomal degradation of the estrogen receptors that play an important role in neuronal differentiation, survival and plasticity. Axonemal dynein assembly factor required for ciliary motility. The sequence is that of Dynein axonemal assembly factor 4 from Rattus norvegicus (Rat).